Consider the following 72-residue polypeptide: Antitoxin VapB11 (72 aa).

Antitoxin component of a type II toxin-antitoxin (TA) system. The protein is Antitoxin VapB11 (vapB11) of Mycobacterium tuberculosis (strain CDC 1551 / Oshkosh).